The chain runs to 277 residues: Venom serine protease (277 aa).

The signal sequence occupies residues 1-19 (MNCGKIILLFITIIGVAKS). The Peptidase S1 domain occupies 34-269 (IVNGVETEIN…FMEFIHNATI (236 aa)). A disulfide bridge connects residues Cys-60 and Cys-76. The active-site Charge relay system is His-75. N-linked (GlcNAc...) asparagine glycans are attached at residues Asn-84 and Asn-104. Asp-126 serves as the catalytic Charge relay system. Asn-155 and Asn-158 each carry an N-linked (GlcNAc...) asparagine glycan. 2 disulfide bridges follow: Cys-192–Cys-207 and Cys-216–Cys-246. N-linked (GlcNAc...) asparagine glycosylation is present at Asn-218. Ser-220 (charge relay system) is an active-site residue. A glycan (N-linked (GlcNAc...) asparagine) is linked at Asn-266.

It belongs to the peptidase S1 family. In terms of tissue distribution, expressed by the venom duct.

The protein localises to the secreted. This is Venom serine protease from Polistes dominula (European paper wasp).